The following is a 100-amino-acid chain: Small ribosomal subunit protein uS14c (100 aa).

This sequence belongs to the universal ribosomal protein uS14 family. Part of the 30S ribosomal subunit.

It is found in the plastid. It localises to the chloroplast. In terms of biological role, binds 16S rRNA, required for the assembly of 30S particles. This chain is Small ribosomal subunit protein uS14c, found in Nymphaea alba (White water-lily).